The following is a 91-amino-acid chain: Cell division protein FtsB (91 aa).

Over 1–3 (MKF) the chain is Cytoplasmic. Residues 4-21 (IVGLLLVLLLALQYQLWI) form a helical membrane-spanning segment. The Periplasmic portion of the chain corresponds to 22–91 (SKDGLGELRQ…ETFFQVVEEP (70 aa)). Residues 26–74 (LGELRQLSRSIKQQRHENATLIERNQVLKAEVQDLKSGLDALEERARSG) are a coiled coil.

The protein belongs to the FtsB family. As to quaternary structure, part of a complex composed of FtsB, FtsL and FtsQ.

Its subcellular location is the cell inner membrane. In terms of biological role, essential cell division protein. May link together the upstream cell division proteins, which are predominantly cytoplasmic, with the downstream cell division proteins, which are predominantly periplasmic. This Nitrosococcus oceani (strain ATCC 19707 / BCRC 17464 / JCM 30415 / NCIMB 11848 / C-107) protein is Cell division protein FtsB.